The chain runs to 47 residues: Large ribosomal subunit protein bL32c (47 aa).

Belongs to the bacterial ribosomal protein bL32 family.

Its subcellular location is the plastid. The chain is Large ribosomal subunit protein bL32c (rpl32) from Prototheca wickerhamii.